A 205-amino-acid chain; its full sequence is Thymidylate kinase (205 aa).

9 to 16 provides a ligand contact to ATP; it reads GPEGSGKT.

The protein belongs to the thymidylate kinase family.

It carries out the reaction dTMP + ATP = dTDP + ADP. In terms of biological role, phosphorylation of dTMP to form dTDP in both de novo and salvage pathways of dTTP synthesis. This chain is Thymidylate kinase, found in Staphylococcus aureus (strain MSSA476).